Reading from the N-terminus, the 458-residue chain is Sensor histidine kinase ZraS (458 aa).

Topologically, residues 1-14 (MRFMQRSKDSLAKW) are cytoplasmic. The helical transmembrane segment at 15–35 (LSAILPVVIVGLVGLFAVTVI) threads the bilayer. Residues 36-194 (RDYGRETAAA…SAEDREQRNT (159 aa)) lie on the Periplasmic side of the membrane. The chain crosses the membrane as a helical span at residues 195-215 (LIILFALATVLLASVLSFFWY). Residues 216 to 458 (RRYLRSRQLL…VNITRKDPQG (243 aa)) lie on the Cytoplasmic side of the membrane. The 208-residue stretch at 244–451 (GVAHEIRNPL…RFTLWLPVNI (208 aa)) folds into the Histidine kinase domain. Histidine 247 carries the post-translational modification Phosphohistidine; by autocatalysis.

Post-translationally, autophosphorylated.

It is found in the cell inner membrane. The enzyme catalyses ATP + protein L-histidine = ADP + protein N-phospho-L-histidine.. Activity of the ZraS/ZraR two-component system is repressed by the zinc-bound form of ZraP, which probably interacts with the periplasmic region of ZraS. Functionally, part of the Zra signaling pathway, an envelope stress response (ESR) system composed of the periplasmic accessory protein ZraP, the histidine kinase ZraS and the transcriptional regulator ZraR. The ZraPSR system contributes to antibiotic resistance and is important for membrane integrity in the presence of membrane-targeting biocides. ZraS is a member of the two-component regulatory system ZraS/ZraR. Functions as a membrane-associated sensor kinase that phosphorylates ZraR in response to high concentrations of Zn(2+) or Pb(2+) in the medium. This chain is Sensor histidine kinase ZraS (zraS), found in Escherichia coli O157:H7.